A 2448-amino-acid chain; its full sequence is Cysteine repeat modular protein 1 (2448 aa).

The helical transmembrane segment at T9–C29 threads the bilayer. Residues N48, N89, N248, N284, N461, N503, N542, N598, and N619 are each glycosylated (N-linked (GlcNAc...) asparagine). 4 FU repeats span residues K431–F481, F485–I530, N535–S566, and S567–A611. FU repeat units lie at residues N645 to P694, T698 to Q727, D728 to G772, Q775 to N813, K819 to S868, G904 to D947, Q950 to A983, N984 to P1027, Q1063 to V1109, and Q1113 to L1144. Residues N761 and N812 are each glycosylated (N-linked (GlcNAc...) asparagine). The N-linked (GlcNAc...) asparagine glycan is linked to N934. N1002 carries an N-linked (GlcNAc...) asparagine glycan. A glycan (N-linked (GlcNAc...) asparagine) is linked at N1146. One copy of the FU 15 repeat lies at Q1147–L1193. N1194 is a glycosylation site (N-linked (GlcNAc...) asparagine). 5 FU repeats span residues N1197 to Q1232, G1234 to S1279, K1281 to Q1332, S1346 to L1394, and N1402 to Q1436. N-linked (GlcNAc...) asparagine glycans are attached at residues N1296, N1328, and N1365. N1506, N1601, N1628, and N1670 each carry an N-linked (GlcNAc...) asparagine glycan. The 35-residue stretch at S1739–Q1773 folds into the EGF-like domain. Intrachain disulfides connect C1743–C1754, C1748–C1761, and C1763–C1772. Residues N1800, N1849, N1877, N1942, N2117, N2155, and N2179 are each glycosylated (N-linked (GlcNAc...) asparagine). Helical transmembrane passes span L2201–I2221 and I2238–V2258. N-linked (GlcNAc...) asparagine glycosylation is present at N2260. 4 helical membrane passes run S2267–F2287, I2296–V2316, M2352–C2372, and A2386–G2406.

Its subcellular location is the membrane. Its function is as follows. Required for mucocyst secretion. The polypeptide is Cysteine repeat modular protein 1 (Tetrahymena thermophila (strain SB210)).